A 184-amino-acid polypeptide reads, in one-letter code: Ribosome-recycling factor (184 aa).

It belongs to the RRF family.

It localises to the cytoplasm. Its function is as follows. Responsible for the release of ribosomes from messenger RNA at the termination of protein biosynthesis. May increase the efficiency of translation by recycling ribosomes from one round of translation to another. In Borrelia recurrentis (strain A1), this protein is Ribosome-recycling factor.